Here is a 240-residue protein sequence, read N- to C-terminus: HTH-type transcriptional repressor STM4068 (240 aa).

The HTH gntR-type domain maps to 9 to 77; sequence TPLYKQLFFI…RGSGSVVCSV (69 aa). A DNA-binding region (H-T-H motif) is located at residues 37–56; it reads QKEIARSYNVSLIVVKQAWS.

Functionally, represses the expression of the STM4065-STM4067 operon. In Salmonella typhimurium (strain LT2 / SGSC1412 / ATCC 700720), this protein is HTH-type transcriptional repressor STM4068.